The following is a 419-amino-acid chain: Queuine tRNA-ribosyltransferase accessory subunit 2 (419 aa).

Zn(2+) is bound by residues Cys-326, Cys-328, Cys-331, and His-357.

It belongs to the queuine tRNA-ribosyltransferase family. QTRT2 subfamily. Heterodimer of a catalytic subunit and an accessory subunit. Zn(2+) serves as cofactor.

It localises to the cytoplasm. Functionally, non-catalytic subunit of the queuine tRNA-ribosyltransferase (TGT) that catalyzes the base-exchange of a guanine (G) residue with queuine (Q) at position 34 (anticodon wobble position) in tRNAs with GU(N) anticodons (tRNA-Asp, -Asn, -His and -Tyr), resulting in the hypermodified nucleoside queuosine (7-(((4,5-cis-dihydroxy-2-cyclopenten-1-yl)amino)methyl)-7-deazaguanosine). In Drosophila grimshawi (Hawaiian fruit fly), this protein is Queuine tRNA-ribosyltransferase accessory subunit 2.